The chain runs to 429 residues: Histidine--tRNA ligase (429 aa).

The protein belongs to the class-II aminoacyl-tRNA synthetase family. In terms of assembly, homodimer.

The protein resides in the cytoplasm. The catalysed reaction is tRNA(His) + L-histidine + ATP = L-histidyl-tRNA(His) + AMP + diphosphate + H(+). The chain is Histidine--tRNA ligase from Pseudomonas fluorescens (strain Pf0-1).